A 476-amino-acid chain; its full sequence is RNA-binding protein 45 (476 aa).

Residues methionine 1–leucine 20 form a disordered region. 2 RRM domains span residues serine 26–serine 106 and threonine 121–lysine 195. Lysine 34 participates in a covalent cross-link: Glycyl lysine isopeptide (Lys-Gly) (interchain with G-Cter in SUMO2). 2 positions are modified to phosphoserine: serine 199 and serine 464. The RRM 3 domain occupies glutamate 392–serine 464.

It localises to the cytoplasm. The protein localises to the nucleus. Functionally, RNA-binding protein with binding specificity for poly(C). May play an important role in neural development. In Homo sapiens (Human), this protein is RNA-binding protein 45 (RBM45).